The primary structure comprises 194 residues: Potassium-transporting ATPase KdpC subunit (194 aa).

A helical transmembrane segment spans residues 12–34 (LFLLLLTGGVYPLLTTALGQWWF).

The protein belongs to the KdpC family. The system is composed of three essential subunits: KdpA, KdpB and KdpC.

It localises to the cell inner membrane. In terms of biological role, part of the high-affinity ATP-driven potassium transport (or Kdp) system, which catalyzes the hydrolysis of ATP coupled with the electrogenic transport of potassium into the cytoplasm. This subunit acts as a catalytic chaperone that increases the ATP-binding affinity of the ATP-hydrolyzing subunit KdpB by the formation of a transient KdpB/KdpC/ATP ternary complex. This is Potassium-transporting ATPase KdpC subunit from Salmonella choleraesuis (strain SC-B67).